A 55-amino-acid chain; its full sequence is ATP synthase F(0) complex subunit 8 (55 aa).

Residues 8 to 24 form a helical membrane-spanning segment; the sequence is PWFMIMLMTWFTYSLLI.

Belongs to the ATPase protein 8 family. Component of the ATP synthase complex composed at least of ATP5F1A/subunit alpha, ATP5F1B/subunit beta, ATP5MC1/subunit c (homooctomer), MT-ATP6/subunit a, MT-ATP8/subunit 8, ATP5ME/subunit e, ATP5MF/subunit f, ATP5MG/subunit g, ATP5MK/subunit k, ATP5MJ/subunit j, ATP5F1C/subunit gamma, ATP5F1D/subunit delta, ATP5F1E/subunit epsilon, ATP5PF/subunit F6, ATP5PB/subunit b, ATP5PD/subunit d, ATP5PO/subunit OSCP. ATP synthase complex consists of a soluble F(1) head domain (subunits alpha(3) and beta(3)) - the catalytic core - and a membrane F(0) domain - the membrane proton channel (subunits c, a, 8, e, f, g, k and j). These two domains are linked by a central stalk (subunits gamma, delta, and epsilon) rotating inside the F1 region and a stationary peripheral stalk (subunits F6, b, d, and OSCP).

It is found in the mitochondrion membrane. Its function is as follows. Subunit 8, of the mitochondrial membrane ATP synthase complex (F(1)F(0) ATP synthase or Complex V) that produces ATP from ADP in the presence of a proton gradient across the membrane which is generated by electron transport complexes of the respiratory chain. ATP synthase complex consist of a soluble F(1) head domain - the catalytic core - and a membrane F(1) domain - the membrane proton channel. These two domains are linked by a central stalk rotating inside the F(1) region and a stationary peripheral stalk. During catalysis, ATP synthesis in the catalytic domain of F(1) is coupled via a rotary mechanism of the central stalk subunits to proton translocation. In vivo, can only synthesize ATP although its ATP hydrolase activity can be activated artificially in vitro. Part of the complex F(0) domain. The protein is ATP synthase F(0) complex subunit 8 of Coturnix japonica (Japanese quail).